We begin with the raw amino-acid sequence, 299 residues long: MKIAILSTDPSLYSTRKLLEAGEQRGHEVYVIDYLRCYMKITSMKTEVIYMGKSLKGFDAIIPRIGASKTFYGTAVVRQFEMMGVFTANPSLAISRSRDKLHCLQLLAREGIELPVTSFAHFTKDINSLINTVGGAPLVIKLLEGSQGIGVVLAETYQVAKSVIEAFSGLNANFLVQEFIEEAGGADVRCFVVGDRVIAAIKRQGTEGEFRSNLHQGGTAKKIKLTPQERSIAMRSAKAIGLKVAGVDLLRSDHGPVVMEVNSSPGLEGIETATGVDVSGKIIEFLEKNLGKGPLGDRL.

The ATP-grasp domain maps to 104 to 287 (LQLLAREGIE…VSGKIIEFLE (184 aa)). ATP-binding positions include lysine 141, 178 to 179 (EF), aspartate 187, and 211 to 213 (RSN). Mg(2+) contacts are provided by aspartate 248, glutamate 260, and asparagine 262. Mn(2+) is bound by residues aspartate 248, glutamate 260, and asparagine 262.

Belongs to the RimK family. Mg(2+) serves as cofactor. The cofactor is Mn(2+).

The protein is Probable alpha-L-glutamate ligase of Trichodesmium erythraeum (strain IMS101).